The primary structure comprises 885 residues: Translation initiation factor IF-2 (885 aa).

Disordered regions lie at residues 55-150 (IPDK…ADVT) and 269-300 (NTINSFGEGGIQRRARKKHKKPENKQNSEAVT). Basic and acidic residues predominate over residues 65–146 (EPKAKKEPKK…AEAPKPKESL (82 aa)). Basic residues predominate over residues 281 to 290 (RRARKKHKKP). In terms of domain architecture, tr-type G spans 384 to 553 (PRAPVITIMG…LLQADLLELK (170 aa)). The G1 stretch occupies residues 393 to 400 (GHVDHGKT). GTP is bound at residue 393–400 (GHVDHGKT). The G2 stretch occupies residues 418 to 422 (GITQH). A G3 region spans residues 439–442 (DTPG). Residues 439 to 443 (DTPGH) and 493 to 496 (NKMD) each bind GTP. The interval 493-496 (NKMD) is G4. The tract at residues 529–531 (SAK) is G5.

It belongs to the TRAFAC class translation factor GTPase superfamily. Classic translation factor GTPase family. IF-2 subfamily.

The protein localises to the cytoplasm. One of the essential components for the initiation of protein synthesis. Protects formylmethionyl-tRNA from spontaneous hydrolysis and promotes its binding to the 30S ribosomal subunits. Also involved in the hydrolysis of GTP during the formation of the 70S ribosomal complex. In Campylobacter concisus (strain 13826), this protein is Translation initiation factor IF-2.